The sequence spans 479 residues: MASSYKMSEQSTTSEHILQKTCDHLILTNRSGLETDSVAEEMKQTVEGQGHTVHWAALLILAVIIPTIGGNILVILAVALEKRLQYATNYFLMSLAIADLLVGLFVMPIALLTIMFEAIWPLPLALCPAWLFLDVLFSTASIMHLCAISLDRYIAIKKPIQANQCNSRATAFIKITVVWLISIGIAIPVPIKGIETDVINPHNVTCELTKDRFGSFMVFGSLAAFFAPLTIMVVTYFLTIHTLQKKAYLVKNKPPQRLTRWTVPTVFLREDSSFSSPEKVAMLDGSHRDKILPNSSDETLMRRMSSVGKRSAQTISNEQRASKALGVVFFLFLLMWCPFFITNLTLALCDSCNQTTLKTLLEIFVWIGYVSSGVNPLIYTLFNKTFREAFGRYITCNYRATKSVKALRKFSSTLCFGNSMVENSKFFTKHGIRNGINPAMYQSPMRLRSSTIQSSSIILLDTLLTENDGDKAEEQVSYI.

The Extracellular portion of the chain corresponds to methionine 1–tryptophan 55. An N-linked (GlcNAc...) asparagine glycan is attached at asparagine 29. A helical transmembrane segment spans residues alanine 56–valine 78. Residues alanine 79 to asparagine 89 lie on the Cytoplasmic side of the membrane. Residues tyrosine 90–leucine 112 traverse the membrane as a helical segment. Residues threonine 113 to proline 128 lie on the Extracellular side of the membrane. The cysteines at positions 127 and 206 are disulfide-linked. Residues alanine 129 to leucine 150 traverse the membrane as a helical segment. Ergotamine-binding residues include aspartate 134 and threonine 139. A DRY motif; important for ligand-induced conformation changes motif is present at residues aspartate 151 to tyrosine 153. Topologically, residues aspartate 151–threonine 170 are cytoplasmic. A helical membrane pass occupies residues alanine 171 to isoleucine 191. Over lysine 192–serine 215 the chain is Extracellular. Leucine 208 provides a ligand contact to ergotamine. Positions aspartate 211–glycine 214 match the [DE]RFG motif; may stabilize a conformation that preferentially activates signaling via beta-arrestin family members motif. A helical membrane pass occupies residues phenylalanine 216–leucine 238. The Cytoplasmic segment spans residues threonine 239–lysine 323. The chain crosses the membrane as a helical span at residues alanine 324–leucine 344. Residues threonine 345–threonine 359 lie on the Extracellular side of the membrane. A disulfide bridge links cysteine 349 with cysteine 352. A helical transmembrane segment spans residues leucine 360–leucine 381. Residues asparagine 375–tyrosine 379 carry the NPxxY motif; important for ligand-induced conformation changes and signaling motif. At phenylalanine 382 to isoleucine 479 the chain is on the cytoplasmic side. A lipid anchor (S-palmitoyl cysteine) is attached at cysteine 396. The PDZ-binding motif lies at serine 477–isoleucine 479.

This sequence belongs to the G-protein coupled receptor 1 family. Interacts (via C-terminus) with MPDZ. In terms of tissue distribution, ubiquitous. Detected in intestine, heart, skeletal muscle, testis, urinary bladder, stomach, liver, lung, brain and kidney. Detected in osteoblasts. Detected in the raphe nucleus in the brain, in dorsal root ganglion neurons, the brain stem, cerebellum and spinal cord. Detected in interstitial cells of Cajal in the small intestine.

It localises to the cell membrane. The protein resides in the synapse. Its subcellular location is the synaptosome. G-protein coupled receptor for 5-hydroxytryptamine (serotonin). Also functions as a receptor for various ergot alkaloid derivatives and psychoactive substances. Ligand binding causes a conformation change that triggers signaling via guanine nucleotide-binding proteins (G proteins) and modulates the activity of downstream effectors. HTR2B is coupled to G(q)/G(11) G alpha proteins and activates phospholipase C-beta, releasing diacylglycerol (DAG) and inositol 1,4,5-trisphosphate (IP3) second messengers that modulate the activity of phosphatidylinositol 3-kinase and promote the release of Ca(2+) ions from intracellular stores, respectively. Beta-arrestin family members inhibit signaling via G proteins and mediate activation of alternative signaling pathways. Plays a role in the regulation of dopamine and 5-hydroxytryptamine release, 5-hydroxytryptamine uptake and in the regulation of extracellular dopamine and 5-hydroxytryptamine levels, and thereby affects neural activity. May play a role in the perception of pain. Plays a role in the regulation of behavior, including impulsive behavior. Required for normal proliferation of embryonic cardiac myocytes and normal heart development. Protects cardiomyocytes against apoptosis. Plays a role in the adaptation of pulmonary arteries to chronic hypoxia. Plays a role in vasoconstriction. Required for normal osteoblast function and proliferation, and for maintaining normal bone density. Required for normal proliferation of the interstitial cells of Cajal in the intestine. This chain is 5-hydroxytryptamine receptor 2B (Htr2b), found in Mus musculus (Mouse).